The sequence spans 425 residues: Beta-1,4-galactosyltransferase galt-1 (425 aa).

Residues 1 to 8 (MPRITASK) are Cytoplasmic-facing. The helical; Signal-anchor for type II membrane protein transmembrane segment at 9 to 29 (IVLLIALSFCITVIYHFPIAT) threads the bilayer. The Lumenal segment spans residues 30-425 (RSSKEYDEYG…FDSVVGLLDL (396 aa)). Asn109 and Asn152 each carry an N-linked (GlcNAc...) asparagine glycan. In terms of domain architecture, GT92 spans 189-394 (KMSICVPALF…LLRVYHYKDK (206 aa)).

The protein belongs to the glycosyltransferase 92 family. It depends on Mn(2+) as a cofactor. In terms of processing, N-glycosylated. In terms of tissue distribution, expressed in intestine and coelomocytes.

It localises to the golgi apparatus. The protein resides in the golgi stack membrane. With respect to regulation, inhibited by EDTA, Cu(2+) and Zn(2+). Catalyzes the transfer of beta-galactose from UDP-galactose to position 4 of alpha-1,6-linked fucose at the reducing end GlcNAc in N-glycan cores. Involved in susceptibility to the nematotoxic C.cinerea galectin Cgl2, likely by contributing to the synthesis of core alpha-1,6-fucosylated N-glycans to which Cgl2 binds. This chain is Beta-1,4-galactosyltransferase galt-1, found in Caenorhabditis elegans.